Reading from the N-terminus, the 807-residue chain is Histone transcription regulator slm9 (807 aa).

WD repeat units follow at residues 62–100 (SFDSPISCIRFTYDGSCLAVATEAGTFLYHSEKWDKAFQ) and 102–140 (LSGPAYEVCWSQQGHILATSWKQISIYVKDEGLRTETIV). Residues 144-164 (EHADSNHQPAVSIEESKEAVE) form a disordered region. WD repeat units lie at residues 182–221 (GHHTFVGGLAFDPMGQFLASQSFDHTLKVWKLSTFGVEKS), 230–273 (PTGN…YDIN), 276–322 (GHQG…PMAV), and 326–367 (LSCS…EKMD). Residues 388-437 (NKNAAADRTTSPTQGQPESPSKSILLRPPPSIASSPESKRRKCPKKFVAR) form a disordered region. The segment covering 395-409 (RTTSPTQGQPESPSK) has biased composition (polar residues). Phosphoserine is present on residues Ser406, Ser421, and Ser422. The span at 426 to 435 (KRRKCPKKFV) shows a compositional bias: basic residues. WD repeat units lie at residues 492–526 (DCSWFSYLPNAIVLANGTSVFWAVATEDSSIYIYS) and 528–574 (AGRL…AIHS).

The protein belongs to the WD repeat HIR1 family. As to quaternary structure, interacts with hip1 and hip3.

The protein localises to the cytoplasm. It localises to the nucleus. Functionally, probably required for replication-independent chromatin assembly. Required for transcriptional silencing in the outer repeat (otr) centromeric repeats and the Tf2 long terminal repeat retrotransposons. May play an indirect role in the regulation of cdc2 and/or wee1 at the G2/M stage of mitosis. This chain is Histone transcription regulator slm9 (slm9), found in Schizosaccharomyces pombe (strain 972 / ATCC 24843) (Fission yeast).